We begin with the raw amino-acid sequence, 534 residues long: Lariat debranching enzyme (534 aa).

Residues Cys8, His10, Asp39, and Asn84 each contribute to the a divalent metal cation site. Residues 124–154 (SGIFKGHDFLRGHHEFPPYTDSTCRSVYHVR) are lariat recognition loop. A divalent metal cation contacts are provided by His174, His226, and His228. Disordered stretches follow at residues 242-275 (KLGD…PPPS) and 501-534 (TETP…AQED).

It belongs to the lariat debranching enzyme family. Fe(2+) serves as cofactor. Zn(2+) is required as a cofactor. The cofactor is Mn(2+).

The protein localises to the nucleus. With respect to regulation, active in presence of diverse metals including Fe(2+), Zn(2+), Mn(2+). Binds two metal cations in two adjacent alpha and beta metal-binding pockets. In terms of biological role, cleaves the 2'-5' phosphodiester linkage at the branch point of lariat intron pre-mRNAs after splicing and converts them into linear molecules that are subsequently degraded. It thereby facilitates ribonucleotide turnover. The chain is Lariat debranching enzyme (ldbr) from Drosophila melanogaster (Fruit fly).